A 206-amino-acid chain; its full sequence is Guanylate kinase (206 aa).

Residues 6–184 enclose the Guanylate kinase-like domain; that stretch reads GTLYIISAPS…ALGDLKAIFR (179 aa). 13 to 20 provides a ligand contact to ATP; sequence APSGAGKS.

Belongs to the guanylate kinase family.

It localises to the cytoplasm. It catalyses the reaction GMP + ATP = GDP + ADP. Functionally, essential for recycling GMP and indirectly, cGMP. This is Guanylate kinase from Pseudomonas fluorescens (strain ATCC BAA-477 / NRRL B-23932 / Pf-5).